A 273-amino-acid polypeptide reads, in one-letter code: Dermonecrotic toxin LdSicTox-alphaIB1avi (273 aa).

H5 is an active-site residue. The Mg(2+) site is built by E25 and D27. Catalysis depends on H41, which acts as the Nucleophile. Cystine bridges form between C45–C51 and C47–C190. D85 serves as a coordination point for Mg(2+). N-linked (GlcNAc...) asparagine glycosylation occurs at N250.

The protein belongs to the arthropod phospholipase D family. Class II subfamily. Requires Mg(2+) as cofactor. As to expression, expressed by the venom gland.

It localises to the secreted. The enzyme catalyses an N-(acyl)-sphingosylphosphocholine = an N-(acyl)-sphingosyl-1,3-cyclic phosphate + choline. It catalyses the reaction an N-(acyl)-sphingosylphosphoethanolamine = an N-(acyl)-sphingosyl-1,3-cyclic phosphate + ethanolamine. It carries out the reaction a 1-acyl-sn-glycero-3-phosphocholine = a 1-acyl-sn-glycero-2,3-cyclic phosphate + choline. The catalysed reaction is a 1-acyl-sn-glycero-3-phosphoethanolamine = a 1-acyl-sn-glycero-2,3-cyclic phosphate + ethanolamine. In terms of biological role, dermonecrotic toxins cleave the phosphodiester linkage between the phosphate and headgroup of certain phospholipids (sphingolipid and lysolipid substrates), forming an alcohol (often choline) and a cyclic phosphate. This toxin acts on sphingomyelin (SM). It may also act on ceramide phosphoethanolamine (CPE), lysophosphatidylcholine (LPC) and lysophosphatidylethanolamine (LPE), but not on lysophosphatidylserine (LPS), and lysophosphatidylglycerol (LPG). It acts by transphosphatidylation, releasing exclusively cyclic phosphate products as second products. Induces dermonecrosis, hemolysis, increased vascular permeability, edema, inflammatory response, and platelet aggregation. The polypeptide is Dermonecrotic toxin LdSicTox-alphaIB1avi (Loxosceles deserta (Desert recluse spider)).